We begin with the raw amino-acid sequence, 359 residues long: 4'-phosphopantetheinyl transferase A (359 aa).

Belongs to the P-Pant transferase superfamily.

The enzyme catalyses apo-[ACP] + CoA = holo-[ACP] + adenosine 3',5'-bisphosphate + H(+). With respect to regulation, activity is inhibited bythe antifunfal copmpounds PD 404,182, 6-nitroso-1,2-benzopyrone, and calmidazolium chloride with IC(50) values of 3.9 uM, 35.2 uM, and 19.2 uM, respectively. In terms of biological role, acyl-carrier-protein synthase that transfers the 4'-phosphopantetheine moiety from coenzyme A to a Ser of an acyl-carrier-protein. The 4'-phosphopantetheine (4'-PPT) portion of CoA provides the essential prosthetic group for a number of carrier proteins and multi-domain enzymes, priming them for the acceptance of acyl building blocks in fatty acid synthesis and many aspects of secondary metabolism mediated by polyketide synthases (PKSs) and non-ribosomal peptide synthetases (NRPSs). PptA is able to transfer the cofactor to a broad range of enzymes with acyl- or peptidyl-carrier protein domains and activates target enzymes involved in the synthesis of lysine, but also secondary metabolites including gliotoxin, fumigaclavine C, fumiquinazole A, fumiquinazoline C, pyripyroprene A, fumagillin, the siderophores triacetylfusarinine C (TAFC) and ferricrocin (FC), and dihydroxy naphthalene (DHN)-melanin. Plays an essential role in virulence. This chain is 4'-phosphopantetheinyl transferase A, found in Aspergillus fumigatus (strain ATCC MYA-4609 / CBS 101355 / FGSC A1100 / Af293) (Neosartorya fumigata).